The sequence spans 1687 residues: MRMATPSSAPSVRNTEKRKNKKASSKASVSFGAPSPLSSESEDEINYMTPPEQEAQPGALAALHAEGPLAGLPVTRSDARVLIFNEWEERKKSDPWLRLDMSDKAIFRRYPHLRPKEDRPDAPSHAEDAMDAKEPVIGSILEQDDHKFYHYSVYIGGGLVMGVNNPSAAVCQATIDVEKLHLWWRPVWEPRHPLDSAELRKCVGMTVPYVATTVNCYQVCCWIVGIKDTWLKRAKISRDLPFYSPVQDWNVDPQEPFIPSKLRMVSDGILVALSAVIGRPIKNLLASVKPLNILNIVLSCDWTFSGIVNALILLAELFDIFWTPPDVTNWMISIFGEWQAEGPFDLALDVVPTLLGGIGMAFGLTSETIGRKLASTNSALKAAQEMGKFAIEVFKQIMAWIWPSEDPVPALLSNMEQAIIKNECQLENQLTAMLRDRNAGAEFLRSLDEEEQEVRKIAAKCGNSATTGTTNALLARISMARAAFEKARAEQTSRVRPVVIMVSGRPGIGKTCFCQNLAKRIAASLGDETSVGIIPRADVDHWDAYKGARVVLWDDFGMDNVVKDALRLQMLADTCPVTLNCDRIENKGKMFDSQVIIITTNQQTPVPLDYVNLEAVCRRIDFLVYAESPVVDDARARAPGDVNAVKAAMRPDYSHINFILAPQGGFDRQGNTPYGKGVTKIIGATALCARAVALVHERHDDFGLQNKVYDFDAGKITAFKAMAADAGIPWYKMAAIGCKAMGCTCVEEAMHLLKDYEVAPCQVIYNGATYNVSCIKGAPMVEKVKEPELPKTLVNCVRRIKEARLRCYCRMAADVITSILQAAGTAFSIYHQIEKRSRPSFYWDRGYTYRDGPGSFDIFEDDDDGWYHSEGKKGKNKKGRGRPGVFRTRGLTDEEYDEFKKRRESRGGKYSIDDYLADREREEELLERDEEEAIFGDGFGLKATRRSRKAERAKLGLVSGGDIRARKPIDWNVVGPSWADDDRQVDYGEKINFEAPVSIWSRVVQFGTGWGFWVSGHVFITAKHVAPPKGTEIFGRKPGDFTVTSSGDFLKYYFTSAVRPDIPAMVLENGCQEGVVASVLVKRASGEMLALAVRMGSQAAIKIGSAVVHGQTGMLLTGSNAKAQDLGTIPGDCGCPYVYKKGNTWVVIGVHVAATRSGNTVIAATHGEPTLEALEFQGPPMLPRPSGTYAGLPIADYGDAPPLSTKTMFWRTSPEKLPPGAWEPAYLGSKDERVDGPSLQQVMRDQLKPYSEPRGLLPPQEILDAVCDAIENRLENTLEPQKPWTFKKACESLDKNTSSGYPYHKQKSKDWTGSAFIGDLGDQATHANNMYEMGKSMRPIYTAALKDELVKPDKIYGKIKKRLLWGSDLGTMIRAARAFGPFCDALKETCIFNPIRVGMSMNEDGPFIFARHANFRYHMDADYTRWDSTQQRAILKRAGDIMVRLSPEPDLARVVMDDLLAPSLLDVGDYKIVVEEGLPSGCPCTTQLNSLAHWILTLCAMVEVTRVDPDIVMQESEFSFYGDDEVVSTNLELDMVKYTMALRRYGLLPTRADKEEGPLERRQTLQGISFLRRAIVGDQFGWYGRLDRASIDRQLLWTKGPNHQNPFETLPGHAQRPSQLMALLGEAAMHGEKYYRTVASRVSKEAAQSGIEMVVPRHRSVLRWVRFGTMDAETPQERSAVFVNEDE.

Positions 1 to 13 are enriched in polar residues; that stretch reads MRMATPSSAPSVR. A disordered region spans residues 1-56; sequence MRMATPSSAPSVRNTEKRKNKKASSKASVSFGAPSPLSSESEDEINYMTPPEQEAQ. The tract at residues 1–116 is interaction with host MAP1LC3A/LC3; the sequence is MRMATPSSAP…FRRYPHLRPK (116 aa). Residues 117 to 341 are interaction with NTPase; that stretch reads EDRPDAPSHA…ISIFGEWQAE (225 aa). The segment at 244–341 is interaction with NS4; the sequence is SPVQDWNVDP…ISIFGEWQAE (98 aa). Host ER membrane association regions lie at residues 261–292 and 302–341; these read KLRM…KPLN and WTFS…WQAE. Residues 342 to 518 are interaction with NS1-2, NS4 and homooligomerization; sequence GPFDLALDVV…GKTCFCQNLA (177 aa). The region spanning 476–641 is the SF3 helicase domain; the sequence is RISMARAAFE…DDARARAPGD (166 aa). 504-511 serves as a coordination point for ATP; that stretch reads GRPGIGKT. An important for mitochondrion targeting region spans residues 595-700; the sequence is VIIITTNQQT…AVALVHERHD (106 aa). Residues 893 to 898 form an acidic region; the sequence is DEEYDE. Tyr-896 is subject to O-(5'-phospho-RNA)-tyrosine. The tract at residues 978-994 is interaction with host EIF4G; the sequence is WADDDRQVDYGEKINFE. The 178-residue stretch at 995–1172 folds into the Peptidase C37 domain; the sequence is APVSIWSRVV…AATHGEPTLE (178 aa). Residues His-1024, Asp-1048, and Cys-1133 each act as for 3CLpro activity in the active site. Residues 1416–1537 form the RdRp catalytic domain; sequence RYHMDADYTR…STNLELDMVK (122 aa). Residues Asp-1420 and Asp-1422 each coordinate Mg(2+). The cysteines at positions 1482 and 1484 are disulfide-linked. Residues Asp-1524, Glu-1525, and Ser-1569 each coordinate Mg(2+).

Homodimer. Interacts with NTPase; this interaction increases the proapoptotic activity of the NTPase and is crucial for the formation of the viral replication complex. Interacts with NS4; this interaction is crucial for the formation of the viral replication complex. Interacts (via N-terminus) with host VAPA. Interacts with host VAPB. In terms of assembly, monomer. As to quaternary structure, homooligomer. Interacts with NS1-2; this interaction increases the proapoptotic activity of the NTPase and is crucial for the formation of the viral replication complex. Interacts with NS4; this interaction increases the proapoptotic activity of the NTPase. Interacts with host G3BP1; this interaction leads to the redistribution of G3BP1 and its cellular partners to the viral replication complexes, thereby preventing the assembly of stress granules. Homodimer. Monomer; in solution. In terms of assembly, interacts with NTPase; this interaction increases the proapoptotic activity of the NTPase. Interacts with NS1-2; this interaction is crucial for the formation of the viral replication complex. As to quaternary structure, monomer. Interacts with the RNA-directed RNA polymerase; this interaction induces the multimerization of the RdRp and enhances its activity. Interacts with host IEF4E; this interaction plays a role in translation of viral proteins. Interacts (via C-terminus) with host IEF4G1 (via central domain); this interaction plays a role in translation of viral proteins. Homohexamer; also forms fibrous hexameric oligomer. Interacts with the viral genome-linked protein; this interaction induces the multimerization of the RdRp and enhances its activity. It depends on Mg(2+) as a cofactor. Mn(2+) serves as cofactor. In terms of processing, specific enzymatic cleavages in vivo yield mature proteins. 3CLpro is first autocatalytically cleaved, then processes the whole polyprotein. Cleaved by host CASP3/caspase 3 at 18-22 h.p.i. The cleavage allows NS1 secretion, which is essential for intestinal infection and resistance to IFN-lambda. Post-translationally, VPg is uridylylated by the polymerase and is covalently attached to the 5'-end of the polyadenylated genomic and subgenomic RNAs. This uridylylated form acts as a nucleotide-peptide primer for the polymerase.

It localises to the host endoplasmic reticulum membrane. The protein localises to the secreted. It is found in the host endosome membrane. The protein resides in the host mitochondrion. Its subcellular location is the host cytoplasm. It localises to the host perinuclear region. The catalysed reaction is a ribonucleoside 5'-triphosphate + H2O = a ribonucleoside 5'-diphosphate + phosphate + H(+). The enzyme catalyses Endopeptidase with a preference for cleavage when the P1 position is occupied by Glu-|-Xaa and the P1' position is occupied by Gly-|-Yaa.. It catalyses the reaction RNA(n) + a ribonucleoside 5'-triphosphate = RNA(n+1) + diphosphate. Inhibited by Suramin, Suramin-related compounds and NF023. Inhibited by PPNDS. Its function is as follows. Induces the proliferation of the host smooth ER membranes forming long tubular structures. These remodeled membranes probably form the viral factories that contain the replication complex. May play a role in viral replication by interacting with host VAPA, a vesicle-associated membrane protein that plays a role in SNARE-mediated vesicle fusion. This interaction may target replication complex to intracellular membranes. Promotes intestinal tropism and persistent fecal shedding in strain CR6. This function requires Glu-94 and is present in persistant strains. In terms of biological role, displays NTPase activity, but probably no helicase activity. Displays RNA chaperone-like activity and destabilizes dsRNA. Induces the formation of convoluted membranes derived from the host ER. These remodeled membranes probably form the viral factories that contain the replication complex. Initiates host cell death by targeting the mitochondrial outer membrane, leading to the permeabilization of mitochondria, programmed host cell death and viral egress. Externalization of host cardiolipin seems to be involved in the process. Probably plays a role in preventing the assembly of host stress granules. Functionally, probable key protein responsible for the formation of membrane alterations by the virus. Induces the formation of convoluted membranes derived from the host ER. These remodeled membranes probably form the viral factories that contain the replication complex. May play a role in targeting replication complex to intracellular membranes. Its function is as follows. Viral genome-linked protein is covalently linked to the 5'-end of the positive-strand, negative-strand genomic RNAs and subgenomic RNA. Acts as a genome-linked replication primer. May recruit ribosome to viral RNA thereby promoting viral proteins translation. Interacts with host translation initiation complex to allow the translation of viral proteins. Induces the formation of aggregates of RNA-directed RNA polymerase in the presence of RNA. Through its interaction with the viral RNA-directed RNA polymerase, plays a crucial role in enhancing the polymerase activity. Processes the polyprotein. 3CLpro-RdRp is first released by autocleavage, then all other proteins are cleaved. May cleave host polyadenylate-binding protein thereby inhibiting cellular translation. Does not cleave host G3BP1. In terms of biological role, replicates genomic and antigenomic RNA by recognizing replications specific signals. Also transcribes a subgenomic mRNA by initiating RNA synthesis internally on antigenomic RNA. This sgRNA codes for structural proteins. Catalyzes the covalent attachment VPg with viral RNAs. The sequence is that of Genome polyprotein from Norovirus (isolate Mouse/NoV/United States/MNV1/2002/GV) (MNV-1).